The primary structure comprises 150 residues: UPF0208 membrane protein VS_0999 (150 aa).

Transmembrane regions (helical) follow at residues 42–62 (FGVK…MVFN) and 70–90 (AVVM…WLGN).

This sequence belongs to the UPF0208 family.

The protein resides in the cell inner membrane. This Vibrio atlanticus (strain LGP32) (Vibrio splendidus (strain Mel32)) protein is UPF0208 membrane protein VS_0999.